The chain runs to 445 residues: MTNPMMSVSSLLTSGQQKVPMVPSPFGPPIVDRDVLSSSIAPTDPSQFCVPSQFGSSGLPNANMPNPLSSHFYSGWGILPPEPIKAVTTRNEMFERHHAARAEMEMYSLYQQRRMERVNPKGLSGLGIPLFYGSSCLGGPTGFQGRSTLPASDVHLHRSTFRHLQGNPILLATRPHFTECWGQKYRLRRGAVYQKPPESDTESFKSQAEEKSSSQMPTLSYEEEEYIKDPDIEVDNQQKPRVADGKPTTVPANPHGELHTHQRKPSSLEANAWDDGKGKPSEQVYEGCDGKNGVFRPVSILPLSGTHEQVALRENCSLSDIQKWTVDDVYNFIRSLPGCSDYAQVFKDHAIDGETLPLLTEQHLRGTMGLKLGPALKIQSQVSQHVGNMFCKKLPSLPTHARQAFDQPADTSPLLDMSSWSDGLSIPGPQDLLSPKRTEQDVMRN.

The tract at residues 98–172 (HAARAEMEMY…HLQGNPILLA (75 aa)) is required for localization to nuclear polycomb bodies. Residues 193–282 (YQKPPESDTE…WDDGKGKPSE (90 aa)) are disordered. Positions 227–244 (IKDPDIEVDNQQKPRVAD) are enriched in basic and acidic residues. The region spanning 324–378 (WTVDDVYNFIRSLPGCSDYAQVFKDHAIDGETLPLLTEQHLRGTMGLKLGPALKI) is the SAM domain. Positions 425–445 (SIPGPQDLLSPKRTEQDVMRN) are disordered. The span at 434-445 (SPKRTEQDVMRN) shows a compositional bias: basic and acidic residues.

In terms of assembly, monomer, homodimer and homooligomer. Component of a Polycomb group (PcG) multiprotein PRC1-like complex. Interacts with PHC2 and NR2E3. Interacts with RNF1 in a PHC2-dependent manner. Interacts with SAMD11. As to expression, expressed in the retina and the pineal gland. In the retina, it is predominantly expressed in the outer nuclear layer and developing rod photoreceptors.

Its subcellular location is the nucleus. It is found in the cytoplasm. Its function is as follows. Component of a Polycomb group (PcG) multiprotein PRC1-like complex, essential for establishing rod photoreceptor cell identity and function by silencing nonrod gene expression in developing rod photoreceptor cells. Via its association with the PRC1-like complex, promotes epigenetic repressive marks H3K27me3 and H2AK119ub marks in nonrod genes, silencing their transcription. Represses Crx-controlled photoreceptor-specific gene expression. This chain is Sterile alpha motif domain-containing protein 7 (Samd7), found in Mus musculus (Mouse).